Consider the following 351-residue polypeptide: Centromere-binding protein 1 (351 aa).

Met1 carries the N-acetylmethionine modification. Composition is skewed to polar residues over residues 1–10 (MNSLANNNKL), 43–52 (LLSQESNDGN), and 65–77 (KGTQ…GLTS). 3 disordered regions span residues 1–164 (MNSL…TQQS), 196–233 (KKDI…VERR), and 327–351 (YEDM…PHEA). Ser45 bears the Phosphoserine; by ATM or ATR mark. Ser48 carries the phosphoserine modification. Phosphoserine is present on Ser84. Composition is skewed to polar residues over residues 100–124 (VNYT…TNAN) and 138–164 (TPSN…TQQS). At Thr138 the chain carries Phosphothreonine. The region spanning 222–270 (QRKDSHKEVERRRRENINTAINVLSDLLPVRESSKAAILACAAEYIQKL) is the bHLH domain.

As to quaternary structure, binds DNA as a dimer. Associates with MET4 to form a heteromeric complex which also includes MET28.

It is found in the nucleus. The protein localises to the mitochondrion. It localises to the chromosome. Its subcellular location is the centromere. Functionally, required for chromosome stability and methionine prototrophy. It is involved in chromosomal segregation. Binds to a highly conserved DNA sequence (5'-RTCACRTG-3'), called CDEI, found in centromeres and in several promoters. DNA-binding activity is enhanced by MET28. Required as an auxiliary factor for transcriptional activation of sulfur metabolism together with MET4 and MET28. The chain is Centromere-binding protein 1 (CBF1) from Saccharomyces cerevisiae (strain ATCC 204508 / S288c) (Baker's yeast).